Consider the following 365-residue polypeptide: Tartrate dehydrogenase/decarboxylase (365 aa).

Mn(2+) contacts are provided by aspartate 225, aspartate 250, and aspartate 254.

The protein belongs to the isocitrate and isopropylmalate dehydrogenases family. In terms of assembly, homodimer. It depends on Mg(2+) as a cofactor. Requires Mn(2+) as cofactor. K(+) is required as a cofactor.

The protein resides in the cytoplasm. It catalyses the reaction tartrate + NAD(+) = 2-hydroxy-3-oxosuccinate + NADH + H(+). The catalysed reaction is (2R,3S)-tartrate + NAD(+) = 2-hydroxy-3-oxosuccinate + NADH + H(+). It carries out the reaction (2R,3R)-tartrate + NAD(+) = 2-hydroxy-3-oxosuccinate + NADH + H(+). The enzyme catalyses (2R,3R)-tartrate + H(+) = (R)-glycerate + CO2. It catalyses the reaction (R)-malate + NAD(+) = pyruvate + CO2 + NADH. The protein operates within carbohydrate acid metabolism; tartrate degradation; 2-hydroxy-3-oxosuccinate from L-tartrate: step 1/1. It functions in the pathway carbohydrate acid metabolism; tartrate degradation; 2-hydroxy-3-oxosuccinate from meso-tartrate: step 1/1. It participates in carbohydrate acid metabolism; tartrate degradation; D-glycerate from L-tartrate: step 1/1. Functionally, has multiple catalytic activities. Apart from catalyzing the oxidation of (+)-tartrate to oxaloglycolate, also converts meso-tartrate to D-glycerate and catalyzes the oxidative decarboxylation of D-malate to pyruvate. The sequence is that of Tartrate dehydrogenase/decarboxylase from Pseudomonas putida (Arthrobacter siderocapsulatus).